Here is a 188-residue protein sequence, read N- to C-terminus: Elongation factor P (188 aa).

The residue at position 34 (lysine 34) is an N6-(3,6-diaminohexanoyl)-5-hydroxylysine.

Belongs to the elongation factor P family. May be beta-lysylated on the epsilon-amino group of Lys-34 by the combined action of EpmA and EpmB, and then hydroxylated on the C5 position of the same residue by EpmC (if this protein is present). Lysylation is critical for the stimulatory effect of EF-P on peptide-bond formation. The lysylation moiety may extend toward the peptidyltransferase center and stabilize the terminal 3-CCA end of the tRNA. Hydroxylation of the C5 position on Lys-34 may allow additional potential stabilizing hydrogen-bond interactions with the P-tRNA.

The protein resides in the cytoplasm. Its pathway is protein biosynthesis; polypeptide chain elongation. Its function is as follows. Involved in peptide bond synthesis. Alleviates ribosome stalling that occurs when 3 or more consecutive Pro residues or the sequence PPG is present in a protein, possibly by augmenting the peptidyl transferase activity of the ribosome. Modification of Lys-34 is required for alleviation. The protein is Elongation factor P of Aliivibrio fischeri (strain ATCC 700601 / ES114) (Vibrio fischeri).